A 529-amino-acid polypeptide reads, in one-letter code: GMP synthase [glutamine-hydrolyzing] (529 aa).

The Glutamine amidotransferase type-1 domain maps to Arg-9 to Leu-211. Cys-86 (nucleophile) is an active-site residue. Catalysis depends on residues His-185 and Glu-187. Residues Trp-212–Arg-404 form the GMPS ATP-PPase domain. Residue Ser-239–Ser-245 participates in ATP binding.

Homodimer.

The enzyme catalyses XMP + L-glutamine + ATP + H2O = GMP + L-glutamate + AMP + diphosphate + 2 H(+). It functions in the pathway purine metabolism; GMP biosynthesis; GMP from XMP (L-Gln route): step 1/1. In terms of biological role, catalyzes the synthesis of GMP from XMP. In Aeromonas hydrophila subsp. hydrophila (strain ATCC 7966 / DSM 30187 / BCRC 13018 / CCUG 14551 / JCM 1027 / KCTC 2358 / NCIMB 9240 / NCTC 8049), this protein is GMP synthase [glutamine-hydrolyzing].